A 1351-amino-acid chain; its full sequence is ABC transporter C family member 6 (1351 aa).

The ABC transmembrane type-1 1 domain maps to asparagine 112–glycine 397. Transmembrane regions (helical) follow at residues leucine 120–isoleucine 140, serine 149–isoleucine 169, and leucine 248–leucine 268. In terms of domain architecture, ABC transporter 1 spans asparagine 474 to threonine 700. Glycine 510 to threonine 517 provides a ligand contact to ATP. A coiled-coil region spans residues lysine 701–isoleucine 734. Helical transmembrane passes span glycine 771–phenylalanine 791, isoleucine 815–leucine 835, leucine 904–alanine 924, methionine 977–serine 999, leucine 1002–serine 1022, and glycine 1025–isoleucine 1045. Positions leucine 777–arginine 1060 constitute an ABC transmembrane type-1 2 domain. The ABC transporter 2 domain maps to isoleucine 1101 to lysine 1336. Glycine 1135 to threonine 1142 serves as a coordination point for ATP.

Belongs to the ABC transporter superfamily. ABCC family. Conjugate transporter (TC 3.A.1.208) subfamily.

It is found in the membrane. In Dictyostelium discoideum (Social amoeba), this protein is ABC transporter C family member 6 (abcC6).